The primary structure comprises 493 residues: Probable cytosol aminopeptidase (493 aa).

Mn(2+) is bound by residues lysine 258 and aspartate 263. Lysine 270 is a catalytic residue. Mn(2+) contacts are provided by aspartate 281, aspartate 340, and glutamate 342. Arginine 344 is an active-site residue.

Belongs to the peptidase M17 family. It depends on Mn(2+) as a cofactor.

The protein resides in the cytoplasm. The enzyme catalyses Release of an N-terminal amino acid, Xaa-|-Yaa-, in which Xaa is preferably Leu, but may be other amino acids including Pro although not Arg or Lys, and Yaa may be Pro. Amino acid amides and methyl esters are also readily hydrolyzed, but rates on arylamides are exceedingly low.. It carries out the reaction Release of an N-terminal amino acid, preferentially leucine, but not glutamic or aspartic acids.. In terms of biological role, presumably involved in the processing and regular turnover of intracellular proteins. Catalyzes the removal of unsubstituted N-terminal amino acids from various peptides. The chain is Probable cytosol aminopeptidase from Caulobacter vibrioides (strain ATCC 19089 / CIP 103742 / CB 15) (Caulobacter crescentus).